The chain runs to 105 residues: NADH dehydrogenase [ubiquinone] 1 beta subcomplex subunit 2, mitochondrial (105 aa).

A mitochondrion-targeting transit peptide spans 1-33 (MSALTRLASFARVGGRLFRSGCARTAGDGGVRH). The segment at 85 to 105 (PYPDPSQWTDEELGIPPDDED) is disordered. Residues 93 to 105 (TDEELGIPPDDED) are compositionally biased toward acidic residues.

Belongs to the complex I NDUFB2 subunit family. As to quaternary structure, complex I is composed of 45 different subunits.

It localises to the mitochondrion inner membrane. In terms of biological role, accessory subunit of the mitochondrial membrane respiratory chain NADH dehydrogenase (Complex I), that is believed not to be involved in catalysis. Complex I functions in the transfer of electrons from NADH to the respiratory chain. The immediate electron acceptor for the enzyme is believed to be ubiquinone. This chain is NADH dehydrogenase [ubiquinone] 1 beta subcomplex subunit 2, mitochondrial (NDUFB2), found in Homo sapiens (Human).